A 339-amino-acid polypeptide reads, in one-letter code: Dihydroorotate dehydrogenase (quinone) (339 aa).

Residues Ala64–Lys68 and Thr88 each bind FMN. Position 68 (Lys68) interacts with substrate. Asn113–Phe117 is a binding site for substrate. Residues Asn141 and Asn174 each coordinate FMN. Substrate is bound at residue Asn174. The active-site Nucleophile is the Ser177. Asn179 is a binding site for substrate. FMN contacts are provided by Lys219 and Thr247. Asn248–Thr249 contributes to the substrate binding site. FMN-binding positions include Gly270, Gly299, and Tyr320 to Ser321.

The protein belongs to the dihydroorotate dehydrogenase family. Type 2 subfamily. In terms of assembly, monomer. Requires FMN as cofactor.

It localises to the cell membrane. It catalyses the reaction (S)-dihydroorotate + a quinone = orotate + a quinol. The protein operates within pyrimidine metabolism; UMP biosynthesis via de novo pathway; orotate from (S)-dihydroorotate (quinone route): step 1/1. In terms of biological role, catalyzes the conversion of dihydroorotate to orotate with quinone as electron acceptor. The protein is Dihydroorotate dehydrogenase (quinone) of Haemophilus influenzae (strain 86-028NP).